The following is a 493-amino-acid chain: Cytochrome P450 2E1 (493 aa).

Residue 298 to 303 (FAGTET) participates in substrate binding. Residue Cys437 coordinates heme.

This sequence belongs to the cytochrome P450 family. In terms of assembly, interacts with chaperones HSP70 and HSP90; this interaction is required for initial targeting to mitochondria. Heme serves as cofactor. In terms of tissue distribution, highest level in the liver and to a lesser extent in the kidney, with a higher level in the male kidney than in the female.

The protein resides in the endoplasmic reticulum membrane. Its subcellular location is the microsome membrane. The protein localises to the mitochondrion inner membrane. The catalysed reaction is an organic molecule + reduced [NADPH--hemoprotein reductase] + O2 = an alcohol + oxidized [NADPH--hemoprotein reductase] + H2O + H(+). It catalyses the reaction (5Z,8Z,11Z)-eicosatrienoate + reduced [NADPH--hemoprotein reductase] + O2 = 19-hydroxy-(5Z,8Z,11Z)-eicosatrienoate + oxidized [NADPH--hemoprotein reductase] + H2O + H(+). The enzyme catalyses (5Z,8Z,11Z,14Z,17Z)-eicosapentaenoate + reduced [NADPH--hemoprotein reductase] + O2 = 19-hydroxy-(5Z,8Z,11Z,14Z,17Z)-eicosapentaenoate + oxidized [NADPH--hemoprotein reductase] + H2O + H(+). It carries out the reaction (4Z,7Z,10Z,13Z,16Z,19Z)-docosahexaenoate + reduced [NADPH--hemoprotein reductase] + O2 = 21-hydroxy-(4Z,7Z,10Z,13Z,16Z,19Z)-docosahexaenoate + oxidized [NADPH--hemoprotein reductase] + H2O + H(+). The catalysed reaction is dodecanoate + reduced [NADPH--hemoprotein reductase] + O2 = 11-hydroxydodecanoate + oxidized [NADPH--hemoprotein reductase] + H2O + H(+). It catalyses the reaction tetradecanoate + reduced [NADPH--hemoprotein reductase] + O2 = 13-hydroxytetradecanoate + oxidized [NADPH--hemoprotein reductase] + H2O + H(+). The enzyme catalyses 4-nitrophenol + NADPH + O2 + H(+) = 4-nitrocatechol + NADP(+) + H2O. Its pathway is lipid metabolism; fatty acid metabolism. The omega-1 hydroxylase activity is stimulated by cytochrome b5. A cytochrome P450 monooxygenase involved in the metabolism of fatty acids. Mechanistically, uses molecular oxygen inserting one oxygen atom into a substrate, and reducing the second into a water molecule, with two electrons provided by NADPH via cytochrome P450 reductase (NADPH--hemoprotein reductase). Catalyzes the hydroxylation of carbon-hydrogen bonds. Hydroxylates fatty acids specifically at the omega-1 position displaying the highest catalytic activity for saturated fatty acids. May be involved in the oxidative metabolism of xenobiotics. The polypeptide is Cytochrome P450 2E1 (Cyp2e1) (Mus musculus (Mouse)).